The chain runs to 1788 residues: Genome polyprotein (1788 aa).

The tract at residues 1–184 (MMMASKDVVA…LCPLPPIDLR (184 aa)) is interaction with host MAP1LC3A/LC3. Low complexity predominate over residues 58-68 (GRTTPEPTGTA). A disordered region spans residues 58-86 (GRTTPEPTGTAGPPPKQQRDRPPRTQEEV). The span at 74 to 84 (QQRDRPPRTQE) shows a compositional bias: basic and acidic residues. Residues 185 to 399 (NMEPASEPTI…ASLLPDFHLQ (215 aa)) are interaction with NTPase. The tract at residues 302-399 (HPTQSWSQQT…ASLLPDFHLQ (98 aa)) is interaction with NS4. Host ER membrane association regions lie at residues 319–350 (KLEL…KPLN) and 361–399 (TFMG…FHLQ). The interaction with NS1-2 and NS4 and homooligomerization stretch occupies residues 400–575 (GPEDLARDLV…GKTKAAEHLA (176 aa)). The 166-residue stretch at 533–698 (RISMARSALA…EQIRRVSPGD (166 aa)) folds into the SF3 helicase domain. 561 to 568 (GPPGIGKT) provides a ligand contact to ATP. The important for mitochondrion targeting stretch occupies residues 652–757 (AIVITTNAPG…AVALTMERQD (106 aa)). The segment at 827-833 (YSLESDG) is functions as endoplasmic reticulum export signal. Positions 866–911 (RAVAYASCIQSAITSILQIAGSALVVNRAVKRMFGTRTATLSLEGP) are host membrane association. A disordered region spans residues 948–979 (EEVAHTEIPSATMEGKNKGKNKKGRGRRNNYN). The span at 965–975 (KGKNKKGRGRR) shows a compositional bias: basic residues. Residues 988–993 (DEEYEE) form an acidic region. Residue Tyr991 is modified to O-(5'-phospho-RNA)-tyrosine. Residues 1083-1099 (WADDEREVDYNEKISFE) form an interaction with host EIF4G region. Residues 1100–1280 (APPTLWSRVT…QASEGETTLE (181 aa)) form the Peptidase C37 domain. Active-site for 3CLpro activity residues include His1129, Glu1153, and Cys1238. The 122-residue stretch at 1515 to 1636 (KYHFDADYTA…STDIEFDPAK (122 aa)) folds into the RdRp catalytic domain. Residues Asp1519, Asp1521, Asp1623, and Glu1624 each coordinate Mg(2+).

Homodimer. Homooligomer. Interacts with NTPase; this interaction increases the proapoptotic activity of the NTPase and is crucial for the formation of the viral replication complex. Interacts with NS4; this interaction is crucial for the formation of the viral replication complex. Interacts (via N-terminus) with host VAPA. Interacts with host MAP1LC3A/LC3; this interaction does not seem to be linked to host autophagy, but rather plays a role in the formation of viral factories. In terms of assembly, homooligomer. Interacts with NS1-2; this interaction increases the proapoptotic activity of the NTPase and is crucial for the formation of the viral replication complex. Interacts with NS4; this interaction increases the proapoptotic activity of the NTPase. As to quaternary structure, homodimer. Monomer; in solution. Interacts with NTPase; this interaction increases the proapoptotic activity of the NTPase. Interacts with NS1-2; this interaction is crucial for the formation of the viral replication complex. In terms of assembly, monomer. Interacts with the RNA-directed RNA polymerase; this interaction induces the multimerization of the RdRp and enhances its activity. Interacts with host IEF4G1; this interaction plays a role in translation of viral proteins. As to quaternary structure, homohexamer; also forms fibrous hexameric oligomer. Interacts with the viral genome-linked protein; this interaction induces the multimerization of the RdRp and enhances its activity. It depends on Mg(2+) as a cofactor. The cofactor is Mn(2+). Specific enzymatic cleavages in vivo yield mature proteins. 3CLpro is first autocatalytically cleaved, then processes the whole polyprotein. NS1/2-3 and NS3-4 sites are cleaved rapidly and NS4-5, NS5-6, and NS6-7 sites are processed subsequently and less efficiently. Post-translationally, VPg is uridylylated by the polymerase and is covalently attached to the 5'-end of the polyadenylated genomic and subgenomic RNAs. This uridylylated form acts as a nucleotide-peptide primer for the polymerase.

It is found in the host Golgi apparatus membrane. It localises to the host endoplasmic reticulum membrane. The catalysed reaction is a ribonucleoside 5'-triphosphate + H2O = a ribonucleoside 5'-diphosphate + phosphate + H(+). It carries out the reaction Endopeptidase with a preference for cleavage when the P1 position is occupied by Glu-|-Xaa and the P1' position is occupied by Gly-|-Yaa.. The enzyme catalyses RNA(n) + a ribonucleoside 5'-triphosphate = RNA(n+1) + diphosphate. In terms of biological role, induces the proliferation of the host smooth ER membranes forming long tubular structures. These remodeled membranes probably form the viral factories that contain the replication complex. May play a role in viral replication by interacting with host VAPA, a vesicle-associated membrane protein that plays a role in SNARE-mediated vesicle fusion. This interaction may target replication complex to intracellular membranes. Its function is as follows. Displays NTPase activity, but no helicase activity. Induces the formation of convoluted membranes derived from the host ER. These remodeled membranes probably form the viral factories that contain the replication complex. Initiates host cell death by targeting the mitochondrial outer membrane, leading to the permeabilization of mitochondria, programmed host cell death and viral egress. Probably plays a role in preventing the assembly of host stress granules. Functionally, probable key protein responsible for the formation of membrane alterations by the virus. Induces the formation of convoluted membranes derived from the host ER. These remodeled membranes probably form the viral factories that contain the replication complex. May play a role in targeting replication complex to intracellular membranes. Viral genome-linked protein is covalently linked to the 5'-end of the positive-strand, negative-strand genomic RNAs and subgenomic RNA. Acts as a genome-linked replication primer. May recruit ribosome to viral RNA thereby promoting viral proteins translation. Interacts with host translation initiation complex to allow the translation of viral proteins. Induces the formation of aggregates of RNA-directed RNA polymerase in the presence of RNA. Through its interaction with the viral RNA-directed RNA polymerase, plays a crucial role in enhancing the polymerase activity. In terms of biological role, processes the polyprotein. 3CLpro-RdRp is first released by autocleavage, then all other proteins are cleaved. May cleave polyadenylate-binding protein thereby inhibiting cellular translation. Its function is as follows. Replicates genomic and antigenomic RNA by recognizing replications specific signals. Also transcribes a subgenomic mRNA by initiating RNA synthesis internally on antigenomic RNA. This sgRNA codes for structural proteins. Catalyzes the covalent attachment VPg with viral RNAs. This chain is Genome polyprotein, found in Southampton virus (strain GI/Human/United Kingdom/Southampton/1991) (SHV).